The sequence spans 326 residues: MGDARSKTDLGDCRFYEKKFPEVDDLIMVKVNRIEDMGAYVSILEYNDMEGMILMSELSKRRFRSVNKLIRVGRHEVVLVLRVDNQKGYIDLSKRRVSPKDIIKCEEHFSKSKKVHQTVRHVAQKHNMTVEELNRKVIWPLYKKYGHALDALKEATMNPDIIFKEMDISDAVKESLLSDIKLRLTPQALKLRGRIDVWCFGYEGIDAVKEALKKGKEISNNEVTINIKLIAPPQYVIVTSCHDKELGMQKIQEAMKVISDKIKEYKGGDFKQQGEILVIGGDDEKRLEELLDKHDGLSSDDEYSSDGDEDDSSNDDDNSSDEDDDD.

The region spanning 24 to 95 (DDLIMVKVNR…QKGYIDLSKR (72 aa)) is the S1 motif domain. Position 59 is a phosphoserine; by eIK1, eIK2 and PK4 (Ser59). Residues 291-326 (LDKHDGLSSDDEYSSDGDEDDSSNDDDNSSDEDDDD) form a disordered region. A compositionally biased stretch (acidic residues) spans 298–326 (SSDDEYSSDGDEDDSSNDDDNSSDEDDDD).

Belongs to the eIF-2-alpha family. Phosphorylates at Ser-59 in mature trophozoites, schizonts and gametocytes but not in rings and young trophozoites. Phosphorylates at Ser-59 by eIK2 in salivary gland sporozoites but not in midgut and hemocoel sporozoites. Dephosphorylated at Ser-59 by UIS2. Phosphorylation of eIF2alpha subunit of the pre-initiation complex eIF2 inhibits recycling of inactive eIF2-GDP to active eIF2-GTP by limiting the activity of the guanine nucleotide exchange factor eIF2B and thus, inhibits protein translation.

Its subcellular location is the cytoplasm. The protein resides in the stress granule. Functionally, functions in the early steps of protein synthesis by forming a ternary complex with GTP and initiator tRNA. May regulate protein translation in response to amino acid starvation. May regulate protein at various stages of parasite development. In Plasmodium berghei (strain Anka), this protein is Eukaryotic translation initiation factor 2 subunit 1.